We begin with the raw amino-acid sequence, 390 residues long: Ureide permease 1 (390 aa).

The Extracellular portion of the chain corresponds to methionine 1–glycine 9. Residues alanine 10–leucine 30 traverse the membrane as a helical segment. The Cytoplasmic segment spans residues threonine 31–aspartate 44. A helical membrane pass occupies residues tyrosine 45 to proline 65. The Extracellular segment spans residues serine 66 to asparagine 78. A helical transmembrane segment spans residues tryptophan 79 to threonine 99. Residues glutamine 100–tyrosine 101 are Cytoplasmic-facing. A helical membrane pass occupies residues alanine 102–isoleucine 122. Topologically, residues glycine 123–arginine 136 are extracellular. The helical transmembrane segment at alanine 137–valine 157 threads the bilayer. Over histidine 158–threonine 221 the chain is Cytoplasmic. Alanine 213 to serine 220 serves as a coordination point for ATP. Residues isoleucine 222–phenylalanine 242 traverse the membrane as a helical segment. Residues asparagine 243–asparagine 261 lie on the Extracellular side of the membrane. A helical membrane pass occupies residues valine 262 to isoleucine 282. Residues arginine 283–arginine 307 are Cytoplasmic-facing. A helical membrane pass occupies residues glycine 308–glycine 328. The Extracellular segment spans residues glutamine 329–tyrosine 333. The helical transmembrane segment at alanine 334 to phenylalanine 354 threads the bilayer. Topologically, residues glycine 355–lysine 363 are cytoplasmic. A helical transmembrane segment spans residues threonine 364–alanine 384. Residues serine 385–lysine 390 are Extracellular-facing.

This sequence belongs to the plant ureide permease (TC 2.A.7.19) family. As to expression, expressed in leaves, flowers, roots and stems.

The protein resides in the membrane. Functionally, proton-coupled transporter that transports a wide spectrum of oxo derivatives of heterocyclic nitrogen compounds, including allantoin, uric acid and xanthine, but not adenine. Mediates high affinity transport of uracil and 5-fluorouracil (a toxic uracil analog). Mediates transport of free pyrimidines and may function during early seedling development in salvage pathways, by the utilization of pyrimidines from seed storage tissue. The sequence is that of Ureide permease 1 from Arabidopsis thaliana (Mouse-ear cress).